We begin with the raw amino-acid sequence, 99 residues long: DNA-directed RNA polymerase subunit omega (99 aa).

Low complexity predominate over residues 1-10 (MSSTSAASAA). A disordered region spans residues 1–20 (MSSTSAASAAGQGALPAYDT).

The protein belongs to the RNA polymerase subunit omega family. In terms of assembly, the RNAP catalytic core consists of 2 alpha, 1 beta, 1 beta' and 1 omega subunit. When a sigma factor is associated with the core the holoenzyme is formed, which can initiate transcription.

The enzyme catalyses RNA(n) + a ribonucleoside 5'-triphosphate = RNA(n+1) + diphosphate. Functionally, promotes RNA polymerase assembly. Latches the N- and C-terminal regions of the beta' subunit thereby facilitating its interaction with the beta and alpha subunits. The chain is DNA-directed RNA polymerase subunit omega from Rhodococcus erythropolis (strain PR4 / NBRC 100887).